The chain runs to 629 residues: tRNA uridine 5-carboxymethylaminomethyl modification enzyme MnmG (629 aa).

Residues 13 to 18, Val125, and Ser180 contribute to the FAD site; that span reads GGGHAG. Position 273 to 287 (273 to 287) interacts with NAD(+); it reads GPRYCPSIEDKVMRF. Position 370 (Gln370) interacts with FAD.

This sequence belongs to the MnmG family. As to quaternary structure, homodimer. Heterotetramer of two MnmE and two MnmG subunits. FAD is required as a cofactor.

Its subcellular location is the cytoplasm. NAD-binding protein involved in the addition of a carboxymethylaminomethyl (cmnm) group at the wobble position (U34) of certain tRNAs, forming tRNA-cmnm(5)s(2)U34. This Aliivibrio fischeri (strain ATCC 700601 / ES114) (Vibrio fischeri) protein is tRNA uridine 5-carboxymethylaminomethyl modification enzyme MnmG.